The following is a 108-amino-acid chain: UPF0060 membrane protein SAR2425 (108 aa).

4 helical membrane-spanning segments follow: residues 5 to 25, 31 to 51, 60 to 80, and 86 to 106; these read IFIF…IWLW, SSLV…IATF, VYAA…MVVD, and KYDV…LLPS.

It belongs to the UPF0060 family.

It localises to the cell membrane. The sequence is that of UPF0060 membrane protein SAR2425 from Staphylococcus aureus (strain MRSA252).